The chain runs to 102 residues: C-X-C motif chemokine 10 (102 aa).

The signal sequence occupies residues 1–19 (MNKSGFLIFCLILLTLSQG). At Arg-24 the chain carries Citrulline. Cystine bridges form between Cys-28–Cys-55 and Cys-30–Cys-72.

It belongs to the intercrine alpha (chemokine CxC) family. Monomer, dimer, and tetramer. Interacts with CXCR3 (via N-terminus).

It is found in the secreted. Its function is as follows. Pro-inflammatory cytokine that is involved in a wide variety of processes such as chemotaxis, differentiation, and activation of peripheral immune cells, regulation of cell growth, apoptosis and modulation of angiostatic effects. Plays thereby an important role during viral infections by stimulating the activation and migration of immune cells to the infected sites. Mechanistically, binding of CXCL10 to the CXCR3 receptor activates G protein-mediated signaling and results in downstream activation of phospholipase C-dependent pathway, an increase in intracellular calcium production and actin reorganization. In turn, recruitment of activated Th1 lymphocytes occurs at sites of inflammation. Activation of the CXCL10/CXCR3 axis also plays an important role in neurons in response to brain injury for activating microglia, the resident macrophage population of the central nervous system, and directing them to the lesion site. This recruitment is an essential element for neuronal reorganization. The chain is C-X-C motif chemokine 10 (CXCL10) from Bos taurus (Bovine).